We begin with the raw amino-acid sequence, 281 residues long: ATP phosphoribosyltransferase (281 aa).

Belongs to the ATP phosphoribosyltransferase family. Long subfamily. The cofactor is Mg(2+).

The protein localises to the cytoplasm. The catalysed reaction is 1-(5-phospho-beta-D-ribosyl)-ATP + diphosphate = 5-phospho-alpha-D-ribose 1-diphosphate + ATP. Its pathway is amino-acid biosynthesis; L-histidine biosynthesis; L-histidine from 5-phospho-alpha-D-ribose 1-diphosphate: step 1/9. Its activity is regulated as follows. Feedback inhibited by histidine. In terms of biological role, catalyzes the condensation of ATP and 5-phosphoribose 1-diphosphate to form N'-(5'-phosphoribosyl)-ATP (PR-ATP). Has a crucial role in the pathway because the rate of histidine biosynthesis seems to be controlled primarily by regulation of HisG enzymatic activity. The polypeptide is ATP phosphoribosyltransferase (Corynebacterium aurimucosum (strain ATCC 700975 / DSM 44827 / CIP 107346 / CN-1) (Corynebacterium nigricans)).